Here is a 278-residue protein sequence, read N- to C-terminus: Glycyl-dTMP PLP-dependent decarboxylase (278 aa).

This sequence belongs to the pyridoxal-phosphate-dependent aminodecarboxylase family.

It carries out the reaction 5-C(alpha)-glycyl-dTMP in DNA + H(+) = 5-aminoethyl-dUMP in DNA + CO2. Converts 5-Calpha-glycinylthymidine (Calpha-GlyT) into 5-aminoethyl-2'-deoxyuridine (5-NedU) as a step in the pathway leading to thymidine hypermodifications in the viral genome. As a final result of the pathway of hypermodification, 5-aminoethyl-2'-deoxyuridine (5-NedU) substitutes for about 30% of thymidines in the viral DNA. These modifications probably prevent degradation of viral genome by the host restriction-modification antiviral defense system. The polypeptide is Glycyl-dTMP PLP-dependent decarboxylase (Pseudomonas aeruginosa).